The following is a 235-amino-acid chain: Probable ribonuclease P protein subunit 3 (235 aa).

Belongs to the eukaryotic/archaeal RNase P protein component 3 family.

It is found in the nucleus. The enzyme catalyses Endonucleolytic cleavage of RNA, removing 5'-extranucleotides from tRNA precursor.. Its function is as follows. Part of ribonuclease P, a protein complex that generates mature tRNA molecules by cleaving their 5'-ends. This is Probable ribonuclease P protein subunit 3 from Schizosaccharomyces pombe (strain 972 / ATCC 24843) (Fission yeast).